We begin with the raw amino-acid sequence, 330 residues long: Aspartate--ammonia ligase (330 aa).

Belongs to the class-II aminoacyl-tRNA synthetase family. AsnA subfamily.

It is found in the cytoplasm. The catalysed reaction is L-aspartate + NH4(+) + ATP = L-asparagine + AMP + diphosphate + H(+). The protein operates within amino-acid biosynthesis; L-asparagine biosynthesis; L-asparagine from L-aspartate (ammonia route): step 1/1. The protein is Aspartate--ammonia ligase of Streptococcus thermophilus (strain CNRZ 1066).